Reading from the N-terminus, the 883-residue chain is HTH-type transcriptional regulator AlkS (883 aa).

Residues 816 to 881 (ENKAGDFLTL…QAIIEAERQG (66 aa)) form the HTH luxR-type domain. The H-T-H motif DNA-binding region spans 840–859 (NKQIATKMYVTEDAIKWHMR).

The protein operates within hydrocarbon metabolism; alkane degradation. In terms of biological role, may act as a transcriptional regulator of AlkB. This chain is HTH-type transcriptional regulator AlkS (alkS), found in Pseudomonas putida (Arthrobacter siderocapsulatus).